Consider the following 170-residue polypeptide: Peptide deformylase (170 aa).

Positions 93 and 135 each coordinate Fe cation. The active site involves Glu-136. His-139 contacts Fe cation.

The protein belongs to the polypeptide deformylase family. Fe(2+) is required as a cofactor.

The enzyme catalyses N-terminal N-formyl-L-methionyl-[peptide] + H2O = N-terminal L-methionyl-[peptide] + formate. Removes the formyl group from the N-terminal Met of newly synthesized proteins. Requires at least a dipeptide for an efficient rate of reaction. N-terminal L-methionine is a prerequisite for activity but the enzyme has broad specificity at other positions. This chain is Peptide deformylase, found in Syntrophobacter fumaroxidans (strain DSM 10017 / MPOB).